The sequence spans 323 residues: Solute carrier family 35 member B1 (323 aa).

A run of 8 helical transmembrane segments spans residues 15–35 (LVCF…QETI), 51–71 (FALS…KLLI), 85–105 (WLYA…NSAL), 136–156 (YPLS…LFMY), 169–189 (TFGY…LTGV), 205–225 (MMLY…VFTG), 253–273 (LGQT…CSII), and 286–306 (VILF…LVFL). The short motif at 319 to 323 (KKPSH) is the Di-lysine motif element.

This sequence belongs to the nucleotide-sugar transporter family. SLC35B subfamily.

It is found in the endoplasmic reticulum membrane. Functionally, probable sugar transporter. In Xenopus tropicalis (Western clawed frog), this protein is Solute carrier family 35 member B1 (slc35b1).